A 350-amino-acid polypeptide reads, in one-letter code: Deoxyhypusine synthase-like protein (350 aa).

It belongs to the deoxyhypusine synthase family.

This Chlorobaculum parvum (strain DSM 263 / NCIMB 8327) (Chlorobium vibrioforme subsp. thiosulfatophilum) protein is Deoxyhypusine synthase-like protein.